The sequence spans 181 residues: Ribosome maturation factor RimM (181 aa).

Residues 97-170 (AGEFWLPDLM…RIEVVAIPGL (74 aa)) enclose the PRC barrel domain.

It belongs to the RimM family. As to quaternary structure, binds ribosomal protein uS19.

Its subcellular location is the cytoplasm. An accessory protein needed during the final step in the assembly of 30S ribosomal subunit, possibly for assembly of the head region. Essential for efficient processing of 16S rRNA. May be needed both before and after RbfA during the maturation of 16S rRNA. It has affinity for free ribosomal 30S subunits but not for 70S ribosomes. This chain is Ribosome maturation factor RimM, found in Gloeobacter violaceus (strain ATCC 29082 / PCC 7421).